The primary structure comprises 317 residues: UDP-3-O-acylglucosamine N-acyltransferase (317 aa).

The active-site Proton acceptor is His229.

Belongs to the transferase hexapeptide repeat family. LpxD subfamily. As to quaternary structure, homotrimer.

It catalyses the reaction a UDP-3-O-[(3R)-3-hydroxyacyl]-alpha-D-glucosamine + a (3R)-hydroxyacyl-[ACP] = a UDP-2-N,3-O-bis[(3R)-3-hydroxyacyl]-alpha-D-glucosamine + holo-[ACP] + H(+). It participates in bacterial outer membrane biogenesis; LPS lipid A biosynthesis. Catalyzes the N-acylation of UDP-3-O-acylglucosamine using 3-hydroxyacyl-ACP as the acyl donor. Is involved in the biosynthesis of lipid A, a phosphorylated glycolipid that anchors the lipopolysaccharide to the outer membrane of the cell. This Campylobacter curvus (strain 525.92) protein is UDP-3-O-acylglucosamine N-acyltransferase.